A 498-amino-acid polypeptide reads, in one-letter code: Cobyric acid synthase (498 aa).

The GATase cobBQ-type domain maps to 257 to 447 (DLEIAVLRLP…LHGLLDNGPW (191 aa)). The Nucleophile role is filled by Cys-338. Residue His-439 is part of the active site.

Belongs to the CobB/CobQ family. CobQ subfamily.

It participates in cofactor biosynthesis; adenosylcobalamin biosynthesis. Catalyzes amidations at positions B, D, E, and G on adenosylcobyrinic A,C-diamide. NH(2) groups are provided by glutamine, and one molecule of ATP is hydrogenolyzed for each amidation. The sequence is that of Cobyric acid synthase from Synechococcus sp. (strain CC9605).